The chain runs to 167 residues: Respiratory supercomplex factor 1-A, mitochondrial (167 aa).

Residues 1-86 (MCSDFEEETS…TERKQRREFE (86 aa)) form the HIG1 domain. The next 2 membrane-spanning stretches (helical) occupy residues 21-38 (EPLI…LYRA) and 53-75 (MFRA…GMYY). Residues 75–107 (YKTERKQRREFEKKVEERKAQEKRDAWLRELEA) adopt a coiled-coil conformation.

The protein belongs to the RCF1 family. In terms of assembly, associates with the respiratory chain complex III/complex IV supercomplex.

The protein resides in the mitochondrion membrane. In terms of biological role, cytochrome c oxidase subunit which plays a role in assembly of respiratory supercomplexes. This chain is Respiratory supercomplex factor 1-A, mitochondrial (rcf1-A), found in Talaromyces marneffei (strain ATCC 18224 / CBS 334.59 / QM 7333) (Penicillium marneffei).